The primary structure comprises 459 residues: uncharacterized protein (459 aa).

Residues 9-67 enclose the TRAM domain; the sequence is KLEVGQTFPVTIKRLGINGEGVGYFKRQVVFIPGALPGEEVVAETTKIQRGFAEAKVKK. The [4Fe-4S] cluster site is built by C80, C86, C89, and C168. The S-adenosyl-L-methionine site is built by Q292, Y321, D342, and D390. C417 acts as the Nucleophile in catalysis.

This sequence belongs to the class I-like SAM-binding methyltransferase superfamily. RNA M5U methyltransferase family.

This is an uncharacterized protein from Bacillus cereus (strain ATCC 10987 / NRS 248).